The sequence spans 477 residues: Glutamyl-tRNA reductase (477 aa).

Substrate contacts are provided by residues 49-52 (TCNR), S109, 114-116 (EQQ), and Q120. C50 (nucleophile) is an active-site residue. Position 189–194 (189–194 (GAGAMG)) interacts with NADP(+).

This sequence belongs to the glutamyl-tRNA reductase family. Homodimer.

The catalysed reaction is (S)-4-amino-5-oxopentanoate + tRNA(Glu) + NADP(+) = L-glutamyl-tRNA(Glu) + NADPH + H(+). It participates in porphyrin-containing compound metabolism; protoporphyrin-IX biosynthesis; 5-aminolevulinate from L-glutamyl-tRNA(Glu): step 1/2. In terms of biological role, catalyzes the NADPH-dependent reduction of glutamyl-tRNA(Glu) to glutamate 1-semialdehyde (GSA). The chain is Glutamyl-tRNA reductase from Nocardia farcinica (strain IFM 10152).